We begin with the raw amino-acid sequence, 196 residues long: Cytochrome c biogenesis ATP-binding export protein CcmA (196 aa).

The ABC transporter domain maps to 2–195; that stretch reads LSFHQLKFNI…HIKSAQILQL (194 aa). Residue 34-41 coordinates ATP; the sequence is GANGCGKT.

It belongs to the ABC transporter superfamily. CcmA exporter (TC 3.A.1.107) family. As to quaternary structure, the complex is composed of two ATP-binding proteins (CcmA) and two transmembrane proteins (CcmB).

It localises to the cell inner membrane. It carries out the reaction heme b(in) + ATP + H2O = heme b(out) + ADP + phosphate + H(+). Functionally, part of the ABC transporter complex CcmAB involved in the biogenesis of c-type cytochromes; once thought to export heme, this seems not to be the case, but its exact role is uncertain. Responsible for energy coupling to the transport system. The chain is Cytochrome c biogenesis ATP-binding export protein CcmA from Rickettsia bellii (strain RML369-C).